Reading from the N-terminus, the 155-residue chain is Ribosome maturation factor RimP (155 aa).

Belongs to the RimP family.

Its subcellular location is the cytoplasm. Required for maturation of 30S ribosomal subunits. The sequence is that of Ribosome maturation factor RimP from Synechococcus sp. (strain RCC307).